The sequence spans 269 residues: uncharacterized protein (269 aa).

Residues 152 to 197 (RYFSKPAYRNAFKANTIRATTAYKKVFNDPSLGSTYPLEVPLGKMS) form the RPE1 insert domain.

This is an uncharacterized protein from Rickettsia prowazekii (strain Madrid E).